The primary structure comprises 284 residues: MELWYTEEQTQHVRLSFKVKEHLFSEQSEFQKVDVLDTYEFGKLMTLDGLVMVTEKDEFIYHDMIVHVPMAVNPNIKNVLIIGGGDGGTARELMRYQSIKHVDMVEIDKMVCDVARDYFPTISSELENPRVSLYYEDGVAFIKDKENKYDLIIIDSTDPVGPGEGLFSQEFYTNCFKALTEQGILVNQNESPVYEQFAREAIRANSKLKKIFPIVEVYQAQIPTYPSGYWLFGFASKSLHPVKDLKSSVWNQLNLNTKYYNTQLHVGAFALPSYVKEQIENGNV.

The PABS domain occupies 2 to 237 (ELWYTEEQTQ…GYWLFGFASK (236 aa)). Position 31 (glutamine 31) interacts with S-methyl-5'-thioadenosine. 2 residues coordinate spermidine: histidine 62 and aspartate 86. S-methyl-5'-thioadenosine-binding positions include glutamate 106 and 137–138 (DG). Aspartate 155 (proton acceptor) is an active-site residue. 155 to 158 (DSTD) contacts spermidine. S-methyl-5'-thioadenosine is bound at residue proline 162.

This sequence belongs to the spermidine/spermine synthase family. In terms of assembly, homodimer or homotetramer.

It localises to the cytoplasm. The enzyme catalyses S-adenosyl 3-(methylsulfanyl)propylamine + putrescine = S-methyl-5'-thioadenosine + spermidine + H(+). It functions in the pathway amine and polyamine biosynthesis; spermidine biosynthesis; spermidine from putrescine: step 1/1. Its function is as follows. Catalyzes the irreversible transfer of a propylamine group from the amino donor S-adenosylmethioninamine (decarboxy-AdoMet) to putrescine (1,4-diaminobutane) to yield spermidine. This Alkaliphilus metalliredigens (strain QYMF) protein is Polyamine aminopropyltransferase.